The primary structure comprises 153 residues: MNIKIIVIGKIRNEFIKAGVNEYLKRLLPFINIKIEFLPSFSELSEKIALLKEEEIILKNLRNGEFIITLDKDGEKISSEEFSKKLFKLPISQNSQITFIIGGIYGVSEKIKQSSNFILSLSSMTFTHEFALLILLEQIYRALKIQRNEPYHY.

S-adenosyl-L-methionine-binding positions include Leu70, Gly102, and 121–126 (LSSMTF).

It belongs to the RNA methyltransferase RlmH family. Homodimer.

Its subcellular location is the cytoplasm. The catalysed reaction is pseudouridine(1915) in 23S rRNA + S-adenosyl-L-methionine = N(3)-methylpseudouridine(1915) in 23S rRNA + S-adenosyl-L-homocysteine + H(+). Functionally, specifically methylates the pseudouridine at position 1915 (m3Psi1915) in 23S rRNA. This is Ribosomal RNA large subunit methyltransferase H from Dictyoglomus thermophilum (strain ATCC 35947 / DSM 3960 / H-6-12).